The following is a 110-amino-acid chain: Ribonuclease P protein component (110 aa).

Belongs to the RnpA family. As to quaternary structure, consists of a catalytic RNA component (M1 or rnpB) and a protein subunit.

It catalyses the reaction Endonucleolytic cleavage of RNA, removing 5'-extranucleotides from tRNA precursor.. RNaseP catalyzes the removal of the 5'-leader sequence from pre-tRNA to produce the mature 5'-terminus. It can also cleave other RNA substrates such as 4.5S RNA. The protein component plays an auxiliary but essential role in vivo by binding to the 5'-leader sequence and broadening the substrate specificity of the ribozyme. This is Ribonuclease P protein component from Mesorhizobium japonicum (strain LMG 29417 / CECT 9101 / MAFF 303099) (Mesorhizobium loti (strain MAFF 303099)).